A 179-amino-acid chain; its full sequence is Large ribosomal subunit protein uL5 (179 aa).

This sequence belongs to the universal ribosomal protein uL5 family. Part of the 50S ribosomal subunit; part of the 5S rRNA/L5/L18/L25 subcomplex. Contacts the 5S rRNA and the P site tRNA. Forms a bridge to the 30S subunit in the 70S ribosome.

Its function is as follows. This is one of the proteins that bind and probably mediate the attachment of the 5S RNA into the large ribosomal subunit, where it forms part of the central protuberance. In the 70S ribosome it contacts protein S13 of the 30S subunit (bridge B1b), connecting the 2 subunits; this bridge is implicated in subunit movement. Contacts the P site tRNA; the 5S rRNA and some of its associated proteins might help stabilize positioning of ribosome-bound tRNAs. The chain is Large ribosomal subunit protein uL5 from Chromohalobacter salexigens (strain ATCC BAA-138 / DSM 3043 / CIP 106854 / NCIMB 13768 / 1H11).